Reading from the N-terminus, the 204-residue chain is Large ribosomal subunit protein bL25 (204 aa).

It belongs to the bacterial ribosomal protein bL25 family. CTC subfamily. As to quaternary structure, part of the 50S ribosomal subunit; part of the 5S rRNA/L5/L18/L25 subcomplex. Contacts the 5S rRNA. Binds to the 5S rRNA independently of L5 and L18.

Its function is as follows. This is one of the proteins that binds to the 5S RNA in the ribosome where it forms part of the central protuberance. The protein is Large ribosomal subunit protein bL25 of Rhizobium etli (strain ATCC 51251 / DSM 11541 / JCM 21823 / NBRC 15573 / CFN 42).